The sequence spans 540 residues: Chaperonin GroEL (540 aa).

ATP-binding positions include 29–32 (TIGP), 86–90 (DGTTT), Gly413, 476–478 (NAA), and Asp492. The interval 520-540 (DKPEPESNNQMPATPGMGGMM) is disordered.

Belongs to the chaperonin (HSP60) family. As to quaternary structure, forms a cylinder of 14 subunits composed of two heptameric rings stacked back-to-back. Interacts with the co-chaperonin GroES.

It localises to the cytoplasm. It catalyses the reaction ATP + H2O + a folded polypeptide = ADP + phosphate + an unfolded polypeptide.. Its function is as follows. Together with its co-chaperonin GroES, plays an essential role in assisting protein folding. The GroEL-GroES system forms a nano-cage that allows encapsulation of the non-native substrate proteins and provides a physical environment optimized to promote and accelerate protein folding. This chain is Chaperonin GroEL, found in Ligilactobacillus salivarius (strain UCC118) (Lactobacillus salivarius).